The chain runs to 354 residues: UPF0283 membrane protein CGSHiGG_02710 (354 aa).

A run of 3 helical transmembrane segments spans residues 57 to 77 (LLKF…VQWI), 87 to 107 (IYLA…KEII), and 211 to 231 (ESAV…FIAW).

This sequence belongs to the UPF0283 family.

Its subcellular location is the cell inner membrane. This chain is UPF0283 membrane protein CGSHiGG_02710, found in Haemophilus influenzae (strain PittGG).